A 270-amino-acid polypeptide reads, in one-letter code: 4-hydroxy-tetrahydrodipicolinate reductase (270 aa).

NAD(+) contacts are provided by residues 8–13 (GALGRM), D34, 102–104 (GTT), and 128–131 (SQNY). The active-site Proton donor/acceptor is the H160. H161 lines the (S)-2,3,4,5-tetrahydrodipicolinate pocket. The Proton donor role is filled by K164. 170–171 (GT) lines the (S)-2,3,4,5-tetrahydrodipicolinate pocket.

This sequence belongs to the DapB family.

It localises to the cytoplasm. It catalyses the reaction (S)-2,3,4,5-tetrahydrodipicolinate + NAD(+) + H2O = (2S,4S)-4-hydroxy-2,3,4,5-tetrahydrodipicolinate + NADH + H(+). The enzyme catalyses (S)-2,3,4,5-tetrahydrodipicolinate + NADP(+) + H2O = (2S,4S)-4-hydroxy-2,3,4,5-tetrahydrodipicolinate + NADPH + H(+). It participates in amino-acid biosynthesis; L-lysine biosynthesis via DAP pathway; (S)-tetrahydrodipicolinate from L-aspartate: step 4/4. Its function is as follows. Catalyzes the conversion of 4-hydroxy-tetrahydrodipicolinate (HTPA) to tetrahydrodipicolinate. This Methanococcus maripaludis (strain DSM 14266 / JCM 13030 / NBRC 101832 / S2 / LL) protein is 4-hydroxy-tetrahydrodipicolinate reductase.